Here is a 157-residue protein sequence, read N- to C-terminus: Cyclic pyranopterin monophosphate synthase (157 aa).

Residues 74–76 (MCH) and 112–113 (ME) contribute to the substrate site. The active site involves Asp127.

It belongs to the MoaC family. Homohexamer; trimer of dimers.

It catalyses the reaction (8S)-3',8-cyclo-7,8-dihydroguanosine 5'-triphosphate = cyclic pyranopterin phosphate + diphosphate. It participates in cofactor biosynthesis; molybdopterin biosynthesis. Functionally, catalyzes the conversion of (8S)-3',8-cyclo-7,8-dihydroguanosine 5'-triphosphate to cyclic pyranopterin monophosphate (cPMP). The sequence is that of Cyclic pyranopterin monophosphate synthase from Syntrophomonas wolfei subsp. wolfei (strain DSM 2245B / Goettingen).